We begin with the raw amino-acid sequence, 695 residues long: U1 snRNP-associated protein usp107 (695 aa).

Over residues 85–96 (RDNESQQKDRKN) the composition is skewed to basic and acidic residues. The disordered stretch occupies residues 85–134 (RDNESQQKDRKNLPRNQKSNEIQEKQTFQTPSSEKSTTERESRPFVPPNS). Residues 98 to 113 (PRNQKSNEIQEKQTFQ) are compositionally biased toward polar residues. The RRM domain occupies 139–221 (RMLFIGNIPK…PSTRLSLITD (83 aa)). The stretch at 265–369 (DVRSRIERAA…NLLSKHRISR (105 aa)) forms a coiled coil. 2 stretches are compositionally biased toward basic and acidic residues: residues 487–506 (EEDA…RTRG) and 548–561 (SERR…RLLL). 2 disordered regions span residues 487 to 509 (EEDA…GEGA) and 540 to 590 (QTKK…AEKT). The PWI domain maps to 605–695 (ESLWALPIDW…HVLLILRSEA (91 aa)).

In terms of assembly, component of the U1 snRNP particle, a subcomplex of the spliceosome. Interacts with prp5 and usp102.

Its subcellular location is the cytoplasm. It is found in the nucleus. Functionally, component of the U1 snRNP particle, which recognizes and binds the 5'-splice site of pre-mRNA. Together with other non-snRNP factors, U1 snRNP forms the spliceosomal commitment complex, that targets pre-mRNA to the splicing pathway. This Schizosaccharomyces pombe (strain 972 / ATCC 24843) (Fission yeast) protein is U1 snRNP-associated protein usp107 (usp107).